The chain runs to 278 residues: Digeranylgeranylglyceryl phosphate synthase (278 aa).

7 helical membrane-spanning segments follow: residues leucine 12–phenylalanine 32, isoleucine 34–glycine 54, leucine 91–valine 111, valine 142–cysteine 162, phenylalanine 204–isoleucine 224, tyrosine 226–methionine 246, and serine 257–phenylalanine 277.

Belongs to the UbiA prenyltransferase family. DGGGP synthase subfamily. The cofactor is Mg(2+).

The protein resides in the cell membrane. The enzyme catalyses sn-3-O-(geranylgeranyl)glycerol 1-phosphate + (2E,6E,10E)-geranylgeranyl diphosphate = 2,3-bis-O-(geranylgeranyl)-sn-glycerol 1-phosphate + diphosphate. It functions in the pathway membrane lipid metabolism; glycerophospholipid metabolism. Functionally, prenyltransferase that catalyzes the transfer of the geranylgeranyl moiety of geranylgeranyl diphosphate (GGPP) to the C2 hydroxyl of (S)-3-O-geranylgeranylglyceryl phosphate (GGGP). This reaction is the second ether-bond-formation step in the biosynthesis of archaeal membrane lipids. This Methanococcus maripaludis (strain C6 / ATCC BAA-1332) protein is Digeranylgeranylglyceryl phosphate synthase.